A 401-amino-acid polypeptide reads, in one-letter code: Putative F-box/FBD/LRR-repeat protein At3g23955 (401 aa).

One can recognise an F-box domain in the interval 56–102 (VPARFQLPDPLLTQILNHLPTEEAVKTSVLSTRWRTLWLWVHNLELS). LRR repeat units follow at residues 128–152 (IESL…AFVK) and 275–296 (MSSL…FLRS). The FBD domain occupies 321–373 (IKRVSISSVPECLLSSLEFVEFKAPICGLAPEMMLVWYFLENSPTLKKLTLRL).

The protein is Putative F-box/FBD/LRR-repeat protein At3g23955 of Arabidopsis thaliana (Mouse-ear cress).